Consider the following 194-residue polypeptide: FMN-dependent NADH:quinone oxidoreductase 1 (194 aa).

FMN contacts are provided by residues serine 9 and 85–88; that span reads MYNF.

It belongs to the azoreductase type 1 family. Homodimer. FMN is required as a cofactor.

The catalysed reaction is 2 a quinone + NADH + H(+) = 2 a 1,4-benzosemiquinone + NAD(+). It catalyses the reaction N,N-dimethyl-1,4-phenylenediamine + anthranilate + 2 NAD(+) = 2-(4-dimethylaminophenyl)diazenylbenzoate + 2 NADH + 2 H(+). Its function is as follows. Quinone reductase that provides resistance to thiol-specific stress caused by electrophilic quinones. In terms of biological role, also exhibits azoreductase activity. Catalyzes the reductive cleavage of the azo bond in aromatic azo compounds to the corresponding amines. The sequence is that of FMN-dependent NADH:quinone oxidoreductase 1 from Xanthomonas euvesicatoria pv. vesicatoria (strain 85-10) (Xanthomonas campestris pv. vesicatoria).